A 952-amino-acid chain; its full sequence is RNA polymerase-associated protein RapA (952 aa).

Residues E164–D334 form the Helicase ATP-binding domain. Residue D177 to T184 participates in ATP binding. Positions D280–H283 match the DEAH box motif. The 177-residue stretch at R492–I668 folds into the Helicase C-terminal domain.

Belongs to the SNF2/RAD54 helicase family. RapA subfamily. Interacts with the RNAP. Has a higher affinity for the core RNAP than for the holoenzyme. Its ATPase activity is stimulated by binding to RNAP.

In terms of biological role, transcription regulator that activates transcription by stimulating RNA polymerase (RNAP) recycling in case of stress conditions such as supercoiled DNA or high salt concentrations. Probably acts by releasing the RNAP, when it is trapped or immobilized on tightly supercoiled DNA. Does not activate transcription on linear DNA. Probably not involved in DNA repair. The chain is RNA polymerase-associated protein RapA from Aliivibrio fischeri (strain ATCC 700601 / ES114) (Vibrio fischeri).